The chain runs to 945 residues: Xylosyltransferase 1 (945 aa).

The Cytoplasmic segment spans residues 1–17 (MQAAPCARRLARRSHSA). A helical; Signal-anchor for type II membrane protein membrane pass occupies residues 18 to 38 (LLAALTVLLLQTLVVWNFSSL). At 39–945 (DSGAGERRGG…GAVKPDGRLR (907 aa)) the chain is on the lumenal side. The disordered stretch occupies residues 42 to 245 (AGERRGGAAV…KYDQPPKCDI (204 aa)). Residues 76-103 (RGGGGGGGGCGGGGRGPQARARGGGPGE) show a composition bias toward gly residues. The span at 131–147 (KVRTDSNNENSVPKDFE) shows a compositional bias: basic and acidic residues. Polar residues predominate over residues 149-158 (VDNSNFAPRT). Basic and acidic residues predominate over residues 163-190 (HQPELAKKPPSRQKELLKRKLEQQEKGK). Residue Asn212 is glycosylated (N-linked (GlcNAc...) asparagine). Residues 235–245 (TKYDQPPKCDI) show a composition bias toward basic and acidic residues. 4 disulfide bridges follow: Cys243-Cys271, Cys287-Cys528, Cys547-Cys560, and Cys549-Cys558. UDP-alpha-D-xylose is bound by residues Val319, Asp347, and 376–378 (TIW). Residue Asn407 is glycosylated (N-linked (GlcNAc...) asparagine). Residue 480–481 (DW) participates in UDP-alpha-D-xylose binding. UDP-alpha-D-xylose is bound by residues Ser561 and 584 to 585 (RK). Cystine bridges form between Cys661/Cys913 and Cys906/Cys919. The N-linked (GlcNAc...) asparagine glycan is linked to Asn763. The disordered stretch occupies residues 926–945 (SFSPDPKSELGAVKPDGRLR).

It belongs to the glycosyltransferase 14 family. XylT subfamily. Monomer. It depends on a divalent metal cation as a cofactor. Contains 7 disulfide bonds. Post-translationally, N-glycosylated.

Its subcellular location is the golgi apparatus membrane. The catalysed reaction is UDP-alpha-D-xylose + L-seryl-[protein] = 3-O-(beta-D-xylosyl)-L-seryl-[protein] + UDP + H(+). It participates in glycan metabolism; chondroitin sulfate biosynthesis. Its pathway is glycan metabolism; heparan sulfate biosynthesis. Its function is as follows. Catalyzes the first step in the biosynthesis of chondroitin sulfate and dermatan sulfate proteoglycans, such as DCN. Transfers D-xylose from UDP-D-xylose to specific serine residues of the core protein. Required for normal maturation of chondrocytes during bone development, normal onset of ossification and normal embryonic and postnatal skeleton development, especially of the long bones. The protein is Xylosyltransferase 1 (XYLT1) of Pan troglodytes (Chimpanzee).